The chain runs to 359 residues: Probable dual-specificity RNA methyltransferase RlmN (359 aa).

Catalysis depends on E91, which acts as the Proton acceptor. Residues 97 to 329 enclose the Radical SAM core domain; it reads QHYGHSVCVT…KKNGVNCVVR (233 aa). A disulfide bond links C104 and C340. [4Fe-4S] cluster is bound by residues C111, C115, and C118. S-adenosyl-L-methionine is bound by residues 163-164, S195, 218-220, and N296; these read GE and SLH. The active-site S-methylcysteine intermediate is the C340.

The protein belongs to the radical SAM superfamily. RlmN family. [4Fe-4S] cluster serves as cofactor.

The protein localises to the cytoplasm. The enzyme catalyses adenosine(2503) in 23S rRNA + 2 reduced [2Fe-2S]-[ferredoxin] + 2 S-adenosyl-L-methionine = 2-methyladenosine(2503) in 23S rRNA + 5'-deoxyadenosine + L-methionine + 2 oxidized [2Fe-2S]-[ferredoxin] + S-adenosyl-L-homocysteine. The catalysed reaction is adenosine(37) in tRNA + 2 reduced [2Fe-2S]-[ferredoxin] + 2 S-adenosyl-L-methionine = 2-methyladenosine(37) in tRNA + 5'-deoxyadenosine + L-methionine + 2 oxidized [2Fe-2S]-[ferredoxin] + S-adenosyl-L-homocysteine. Functionally, specifically methylates position 2 of adenine 2503 in 23S rRNA and position 2 of adenine 37 in tRNAs. In Streptococcus pyogenes serotype M3 (strain ATCC BAA-595 / MGAS315), this protein is Probable dual-specificity RNA methyltransferase RlmN.